The chain runs to 631 residues: Phosphomethylpyrimidine synthase (631 aa).

Residues Asn239, Met268, Tyr297, His333, 353-355, 394-397, and Glu433 each bind substrate; these read SRG and DGLR. His437 provides a ligand contact to Zn(2+). Tyr460 serves as a coordination point for substrate. His501 is a Zn(2+) binding site. The [4Fe-4S] cluster site is built by Cys581, Cys584, and Cys589.

Belongs to the ThiC family. Homodimer. It depends on [4Fe-4S] cluster as a cofactor.

It catalyses the reaction 5-amino-1-(5-phospho-beta-D-ribosyl)imidazole + S-adenosyl-L-methionine = 4-amino-2-methyl-5-(phosphooxymethyl)pyrimidine + CO + 5'-deoxyadenosine + formate + L-methionine + 3 H(+). The protein operates within cofactor biosynthesis; thiamine diphosphate biosynthesis. Its function is as follows. Catalyzes the synthesis of the hydroxymethylpyrimidine phosphate (HMP-P) moiety of thiamine from aminoimidazole ribotide (AIR) in a radical S-adenosyl-L-methionine (SAM)-dependent reaction. The polypeptide is Phosphomethylpyrimidine synthase (Salmonella dublin (strain CT_02021853)).